Here is a 410-residue protein sequence, read N- to C-terminus: Polyprenol-phosphate-mannose-dependent alpha-(1-2)-phosphatidylinositol pentamannoside mannosyltransferase (410 aa).

10 helical membrane-spanning segments follow: residues 31 to 51 (LAPM…YLVP), 96 to 116 (FAAI…AFIW), 160 to 180 (TFDY…AVST), 188 to 208 (LLVG…LYFL), 214 to 234 (AAVA…WLVV), 276 to 296 (GFGP…LLAW), 306 to 326 (LGGI…SWTH), 328 to 348 (WVWL…ALRG), 351 to 371 (ILGW…LSFA), and 384 to 404 (LAWA…WIAF).

It belongs to the glycosyltransferase 87 family.

The protein resides in the cell membrane. The protein operates within phospholipid metabolism; phosphatidylinositol metabolism. Catalyzes the alpha-1,2 addition of a mannose residue from polyprenol-phosphate-mannose (PPM) to a monoacyl phosphatidylinositol tetramannoside (AcPIM4) to generate a monoacyl phosphatidylinositol pentamannoside (AcPIM5). This chain is Polyprenol-phosphate-mannose-dependent alpha-(1-2)-phosphatidylinositol pentamannoside mannosyltransferase, found in Mycolicibacterium smegmatis (strain ATCC 700084 / mc(2)155) (Mycobacterium smegmatis).